The primary structure comprises 546 residues: MSAKEVKFGVNARDRMLRGVDILANAVQVTLGPKGRNVVLDKSFGAPRITKDGVAVAKEIELDDKFENMGAQMVREVASKAADAAGDGTTTATVLAAAIVREGAKSVAAGMNPMDLKRGIDLAVEAVVADLQKNSKKVTSNDEIAQVGAISANGDQEIGKFLADAVKKVGNEGVITVEEAKSLETELDVVEGMQFDRGYISPYFVTNADKMRVEMDDAYILINEKKLSSLNELLPLLEAVVQTGKPLVIVAEDVEGEALATLVVNRLRGGLKVAAVKAPGFGDRRKAMLQDIAILTGGQAISEDLGIKLENVTLNMLGRAKKVMIDKENTTIVNGAGKKADIEARVAQIKAQIEETTSDYDREKLQERLAKLAGGVAVIRVGGATEVEVKERKDRVDDAMHATRAAVEEGIVPGGGVALLRASEQLKGLRTENDDQKTGVEIVRKALSWPARQIAINAGEDGSIVVGKVLDNEQYSFGFDAQTGEYSNLVSKGIIDPAKVVRIAVQNASSVAGLLITTEAMVAELPKKATAGPAMPAAPGMGGMDF.

ATP-binding positions include Thr-30–Pro-33, Lys-51, Asp-87–Thr-91, Gly-415, and Asp-496.

It belongs to the chaperonin (HSP60) family. Forms a cylinder of 14 subunits composed of two heptameric rings stacked back-to-back. Interacts with the co-chaperonin GroES.

Its subcellular location is the cytoplasm. It carries out the reaction ATP + H2O + a folded polypeptide = ADP + phosphate + an unfolded polypeptide.. In terms of biological role, together with its co-chaperonin GroES, plays an essential role in assisting protein folding. The GroEL-GroES system forms a nano-cage that allows encapsulation of the non-native substrate proteins and provides a physical environment optimized to promote and accelerate protein folding. This is Chaperonin GroEL 3 from Bradyrhizobium diazoefficiens (strain JCM 10833 / BCRC 13528 / IAM 13628 / NBRC 14792 / USDA 110).